We begin with the raw amino-acid sequence, 295 residues long: CBY1-interacting BAR domain-containing protein 1 (295 aa).

The transit peptide at 1 to 49 directs the protein to the mitochondrion; the sequence is MMSRTPDARARDTQTKQIQENITSVEKHFGDLCQLFAAYVRKTARLRDK. Residues 12–222 form a BAR-like region; the sequence is DTQTKQIQEN…NVDEEGDLEV (211 aa). Residues 111 to 185 adopt a coiled-coil conformation; sequence KREDLKQTQS…KQKIRDIKKV (75 aa). Over residues 243–265 the composition is skewed to polar residues; the sequence is SKLSLNRTGTSMSKSGTMQSRTS. The interval 243–295 is disordered; the sequence is SKLSLNRTGTSMSKSGTMQSRTSSRQRKRDDEEDEEEDDEDEDDLEEVTDDEH. Over residues 273 to 295 the composition is skewed to acidic residues; that stretch reads DEEDEEEDDEDEDDLEEVTDDEH.

The protein belongs to the CIBAR family.

It is found in the cytoplasm. It localises to the cytoskeleton. The protein localises to the microtubule organizing center. Its subcellular location is the centrosome. The protein resides in the centriole. It is found in the cell projection. It localises to the cilium. The protein localises to the nucleus. Its subcellular location is the mitochondrion inner membrane. The protein resides in the flagellum. Plays a critical role in regulating mitochondrial ultrastructure and function by maintaining the integrity of mitochondrial morphology, particularly the organization of cristae. Plays a crucial role in ciliogenesis. Plays a key role in the correct positioning of the annulus, a septin-based ring structure in the sperm flagellum, serving both as a physical barrier and a membrane diffusion barrier that separates the midpiece (MP) from the principal piece (PP). In Danio rerio (Zebrafish), this protein is CBY1-interacting BAR domain-containing protein 1 (cibar1).